The following is a 316-amino-acid chain: 4-hydroxyphenylacetate decarboxylase activating enzyme (316 aa).

The region spanning 20–307 (HDGPGCRTTV…QDIFLDNGIA (288 aa)) is the Radical SAM core domain. Residues Cys34, Cys38, Cys41, Cys60, Cys66, Cys69, and Cys105 each contribute to the [4Fe-4S] cluster site. 40-42 (WCA) is a binding site for S-adenosyl-L-methionine. Positions 84 to 115 (NKPVIDWNICKDCESFECVNSCYYNAFKLCAK) constitute a 4Fe-4S ferredoxin-type domain. S-adenosyl-L-methionine-binding positions include Gly144, 193–195 (DIK), and His267.

Belongs to the organic radical-activating enzymes family. Monomer. Requires [4Fe-4S] cluster as cofactor.

It catalyses the reaction glycyl-[protein] + reduced [flavodoxin] + S-adenosyl-L-methionine = glycin-2-yl radical-[protein] + semiquinone [flavodoxin] + 5'-deoxyadenosine + L-methionine + H(+). Catalyzes activation of 4-hydroxyphenylacetate decarboxylase under anaerobic conditions by generation of an organic free radical on a glycine residue, via a homolytic cleavage of S-adenosyl-L-methionine (SAM). This Clostridioides difficile (strain 630) (Peptoclostridium difficile) protein is 4-hydroxyphenylacetate decarboxylase activating enzyme.